The chain runs to 361 residues: S-adenosylmethionine decarboxylase proenzyme (361 aa).

Residues E8 and E11 contribute to the active site. S68 serves as the catalytic Schiff-base intermediate with substrate; via pyruvic acid. S68 carries the post-translational modification Pyruvic acid (Ser); by autocatalysis. C82 functions as the Proton donor; for catalytic activity in the catalytic mechanism. Active-site proton acceptor; for processing activity residues include S234 and H247. The disordered stretch occupies residues 341 to 361; it reads SCGSPRSTLHRCWSETENEEE.

Belongs to the eukaryotic AdoMetDC family. The cofactor is pyruvate. Post-translationally, is synthesized initially as an inactive proenzyme. Formation of the active enzyme involves a self-maturation process in which the active site pyruvoyl group is generated from an internal serine residue via an autocatalytic post-translational modification. Two non-identical subunits are generated from the proenzyme in this reaction, and the pyruvate is formed at the N-terminus of the alpha chain, which is derived from the carboxyl end of the proenzyme. The post-translation cleavage follows an unusual pathway, termed non-hydrolytic serinolysis, in which the side chain hydroxyl group of the serine supplies its oxygen atom to form the C-terminus of the beta chain, while the remainder of the serine residue undergoes an oxidative deamination to produce ammonia and the pyruvoyl group blocking the N-terminus of the alpha chain.

It carries out the reaction S-adenosyl-L-methionine + H(+) = S-adenosyl 3-(methylsulfanyl)propylamine + CO2. The protein operates within amine and polyamine biosynthesis; S-adenosylmethioninamine biosynthesis; S-adenosylmethioninamine from S-adenosyl-L-methionine: step 1/1. In Helianthus annuus (Common sunflower), this protein is S-adenosylmethionine decarboxylase proenzyme (SAMDC).